Consider the following 1082-residue polypeptide: Integrator complex subunit 3 homolog (1082 aa).

3 disordered regions span residues 483-563, 923-945, and 1005-1082; these read PGPP…VSDD, YPSN…TAPT, and DETS…SDSD. 2 stretches are compositionally biased toward low complexity: residues 517–528 and 542–555; these read PAAKAASTAASA and TKPA…TTTT. The span at 936-945 shows a compositional bias: polar residues; that stretch reads KSAQQNTAPT. 2 stretches are compositionally biased toward low complexity: residues 1008 to 1018 and 1033 to 1056; these read STTVGRRGTSS and EKAA…ASAK.

This sequence belongs to the Integrator subunit 3 family. As to quaternary structure, belongs to the multiprotein complex Integrator. The core complex associates with protein phosphatase 2A subunits, to form the Integrator-PP2A (INTAC) complex.

It is found in the nucleus. It localises to the cytoplasm. Component of the integrator complex, a multiprotein complex that terminates RNA polymerase II (Pol II) transcription in the promoter-proximal region of genes. The integrator complex provides a quality checkpoint during transcription elongation by driving premature transcription termination of transcripts that are unfavorably configured for transcriptional elongation: the complex terminates transcription by (1) catalyzing dephosphorylation of the C-terminal domain (CTD) of Pol II subunit Polr2A/Rbp1 and Spt5, and (2) degrading the exiting nascent RNA transcript via endonuclease activity. The integrator complex is also involved in the 3'-end processing of the U7 snRNA, and also the spliceosomal snRNAs U1, U2, U4 and U5. This is Integrator complex subunit 3 homolog from Anopheles gambiae (African malaria mosquito).